A 400-amino-acid chain; its full sequence is Queuine tRNA-ribosyltransferase catalytic subunit (400 aa).

Residue Asp-89 is the Proton acceptor of the active site. Residues 89 to 93 (DSGGF), Asp-143, Gln-185, and Gly-212 contribute to the substrate site. Residues 243–249 (GVGFPVD) are RNA binding. The active-site Nucleophile is the Asp-262. The RNA binding; important for wobble base 34 recognition stretch occupies residues 267–271 (TRTAR). Zn(2+) is bound by residues Cys-301, Cys-303, Cys-306, and His-331.

The protein belongs to the queuine tRNA-ribosyltransferase family. Heterodimer of a catalytic subunit and an accessory subunit. Requires Zn(2+) as cofactor.

The protein resides in the cytoplasm. The enzyme catalyses guanosine(34) in tRNA + queuine = queuosine(34) in tRNA + guanine. Catalytic subunit of the queuine tRNA-ribosyltransferase (TGT) that catalyzes the base-exchange of a guanine (G) residue with queuine (Q) at position 34 (anticodon wobble position) in tRNAs with GU(N) anticodons (tRNA-Asp, -Asn, -His and -Tyr), resulting in the hypermodified nucleoside queuosine (7-(((4,5-cis-dihydroxy-2-cyclopenten-1-yl)amino)methyl)-7-deazaguanosine). Catalysis occurs through a double-displacement mechanism. The nucleophile active site attacks the C1' of nucleotide 34 to detach the guanine base from the RNA, forming a covalent enzyme-RNA intermediate. The proton acceptor active site deprotonates the incoming queuine, allowing a nucleophilic attack on the C1' of the ribose to form the product. The chain is Queuine tRNA-ribosyltransferase catalytic subunit from Caenorhabditis elegans.